The sequence spans 277 residues: ATP-dependent Clp protease proteolytic subunit, mitochondrial (277 aa).

A mitochondrion-targeting transit peptide spans 1 to 56 (MWPGILVGGARVASCRYPALGPRLAAHFPAQRPPQRTLQNGLALQRCLHATATRAL). S153 serves as the catalytic Nucleophile. H178 is an active-site residue. Residue K200 is modified to N6-succinyllysine. K211 bears the N6-acetyllysine mark. A disordered region spans residues 246 to 277 (VHPPQDGEDEPTLVQKEPVEAAPAAEPVPAST). Low complexity predominate over residues 265–277 (EAAPAAEPVPAST).

The protein belongs to the peptidase S14 family. In terms of assembly, fourteen CLPP subunits assemble into 2 heptameric rings which stack back to back to give a disk-like structure with a central cavity. Component of the ClpXP complex formed by the assembly of two CLPP heptameric rings with two CLPX hexameric rings, giving rise to a symmetrical structure with two central CLPP rings flanked by a CLPX ring at either end of the complex. As to expression, detected in liver (at protein level). Predominantly expressed in skeletal muscle. Intermediate levels in heart, liver and pancreas. Low in brain, placenta, lung and kidney.

The protein resides in the mitochondrion matrix. The enzyme catalyses Hydrolysis of proteins to small peptides in the presence of ATP and magnesium. alpha-casein is the usual test substrate. In the absence of ATP, only oligopeptides shorter than five residues are hydrolyzed (such as succinyl-Leu-Tyr-|-NHMec, and Leu-Tyr-Leu-|-Tyr-Trp, in which cleavage of the -Tyr-|-Leu- and -Tyr-|-Trp bonds also occurs).. Its function is as follows. Protease component of the ClpXP complex that cleaves peptides and various proteins in an ATP-dependent process. Has low peptidase activity in the absence of CLPX. The ClpXP complex can degrade CSN1S1, CSN2 and CSN3, as well as synthetic peptides (in vitro) and may be responsible for a fairly general and central housekeeping function rather than for the degradation of specific substrates. Cleaves PINK1 in the mitochondrion. The chain is ATP-dependent Clp protease proteolytic subunit, mitochondrial from Homo sapiens (Human).